A 245-amino-acid chain; its full sequence is Phycocyanobilin:ferredoxin oxidoreductase (245 aa).

Belongs to the HY2 family.

The catalysed reaction is (2R,3Z)-phycocyanobilin + 4 oxidized [2Fe-2S]-[ferredoxin] = biliverdin IXalpha + 4 reduced [2Fe-2S]-[ferredoxin] + 4 H(+). Catalyzes the four-electron reduction of biliverdin IX-alpha (2-electron reduction at both the A and D rings); the reaction proceeds via an isolatable 2-electron intermediate, 181,182-dihydrobiliverdin. The protein is Phycocyanobilin:ferredoxin oxidoreductase of Microcystis aeruginosa (strain NIES-843 / IAM M-2473).